A 443-amino-acid polypeptide reads, in one-letter code: Ribosomal protein uS12 methylthiotransferase RimO (443 aa).

The region spanning 5–115 (PNIGFISLGC…VMQHVHKYVP (111 aa)) is the MTTase N-terminal domain. [4Fe-4S] cluster-binding residues include Cys-14, Cys-50, Cys-79, Cys-147, Cys-151, and Cys-154. Residues 133–374 (LTPKHYAYLK…MQVQQRISVA (242 aa)) enclose the Radical SAM core domain. The 67-residue stretch at 377-443 (QQKIGKTLAI…ADEYDLWGTY (67 aa)) folds into the TRAM domain.

The protein belongs to the methylthiotransferase family. RimO subfamily. The cofactor is [4Fe-4S] cluster.

Its subcellular location is the cytoplasm. The catalysed reaction is L-aspartate(89)-[ribosomal protein uS12]-hydrogen + (sulfur carrier)-SH + AH2 + 2 S-adenosyl-L-methionine = 3-methylsulfanyl-L-aspartate(89)-[ribosomal protein uS12]-hydrogen + (sulfur carrier)-H + 5'-deoxyadenosine + L-methionine + A + S-adenosyl-L-homocysteine + 2 H(+). In terms of biological role, catalyzes the methylthiolation of an aspartic acid residue of ribosomal protein uS12. In Haemophilus ducreyi (strain 35000HP / ATCC 700724), this protein is Ribosomal protein uS12 methylthiotransferase RimO.